The sequence spans 198 residues: N-acetyltransferase 9-like protein (198 aa).

The region spanning 34-178 (EEIRRLTGSE…KEITMELPGE (145 aa)) is the N-acetyltransferase domain.

The protein belongs to the acetyltransferase family. GNAT subfamily.

The sequence is that of N-acetyltransferase 9-like protein from Caenorhabditis briggsae.